The primary structure comprises 693 residues: F-box protein MAX2 (693 aa).

In terms of domain architecture, F-box spans 3 to 50 (STTLSDLPDVILSTISSLVSDSRARNSLSLVSHKFLALERSTRSHLTI). LRR repeat units lie at residues 9–34 (LPDV…SLVS), 49–74 (TIRG…DLSF), 75–100 (LSPW…RLKF), 110–135 (VYTR…KLLR), 141–167 (SQIP…DLSN), 168–196 (FYHW…DLLT), 200–225 (TEGY…RVAC), 232–257 (FEFV…HMVD), 274–299 (DSAV…VLDV), 302–327 (DVKH…KLGQ), 332–356 (CSAT…SIKN), 357–382 (SGDL…EIQG), 383–409 (CENV…RISC), and 410–436 (CKNL…HIDC). Positions 445–465 (EVEGRVETSEADHEEEDDGYE) are disordered. 4 LRR repeats span residues 480 to 505 (CSTS…SLWI), 508 to 532 (GEFL…RIKI), 541 to 565 (RPAE…QLDC), and 608 to 637 (DRDV…FIHG).

Part of a SCF (SKP1-cullin-F-box) protein ligase complex. Interacts with SKP1A/ASK1. Interacts with CUL1. Interacts with SMXL6, SMXL7 and SMXL8. Interacts with D14. Forms a complex with D14 and SKP1A/ASK1 in presence of strigolactone. As to expression, expressed in the vasculature of growing leaves and roots, rosette axillary bud, flowers, siliques, funiculi and stems.

Its subcellular location is the nucleus. It functions in the pathway protein modification; protein ubiquitination. Component of SCF(ASK-cullin-F-box) E3 ubiquitin ligase complexes, which may mediate the ubiquitination and subsequent proteasomal degradation of target proteins. Promotes the senescence. Is necessary for responses to strigolactones and karrikins. Contributes to the selective repression of axillary shoots and moderates the branching by regulating negatively the auxin transport in primary stems, in an AXR1-independent manner. Required for the progression of leaf senescence mediated by methyl jasmonate. Required at each node to suppress axillary bud growth. This chain is F-box protein MAX2, found in Arabidopsis thaliana (Mouse-ear cress).